We begin with the raw amino-acid sequence, 189 residues long: Resolvase (189 aa).

The Resolvase/invertase-type recombinase catalytic domain occupies 1–139 (MLVGYARVST…EGLKSAKARG (139 aa)). The active-site O-(5'-phospho-DNA)-serine intermediate is the S9. Residues 130 to 151 (EGLKSAKARGRNGGRPSKRNDK) form a disordered region. Positions 165-184 (IVDIVKQTGLSRATVYRVLN) form a DNA-binding region, H-T-H motif.

Belongs to the site-specific recombinase resolvase family.

A likely role for the res protein would be to stabilize pIP404 by reducing the number of plasmid multimers resulting from homologous recombination. This Clostridium perfringens protein is Resolvase (res).